Reading from the N-terminus, the 389-residue chain is Succinate--CoA ligase [ADP-forming] subunit beta (389 aa).

In terms of domain architecture, ATP-grasp spans 9 to 244; that stretch reads KEILRKFGVA…LDEEDPAEVE (236 aa). Residues K46, 53-55, E99, A102, and E107 each bind ATP; that span reads GRG. The Mg(2+) site is built by N199 and D213. Substrate contacts are provided by residues N264 and 321 to 323; that span reads GIM.

This sequence belongs to the succinate/malate CoA ligase beta subunit family. In terms of assembly, heterotetramer of two alpha and two beta subunits. It depends on Mg(2+) as a cofactor.

The enzyme catalyses succinate + ATP + CoA = succinyl-CoA + ADP + phosphate. It carries out the reaction GTP + succinate + CoA = succinyl-CoA + GDP + phosphate. Its pathway is carbohydrate metabolism; tricarboxylic acid cycle; succinate from succinyl-CoA (ligase route): step 1/1. Succinyl-CoA synthetase functions in the citric acid cycle (TCA), coupling the hydrolysis of succinyl-CoA to the synthesis of either ATP or GTP and thus represents the only step of substrate-level phosphorylation in the TCA. The beta subunit provides nucleotide specificity of the enzyme and binds the substrate succinate, while the binding sites for coenzyme A and phosphate are found in the alpha subunit. In Paraburkholderia phytofirmans (strain DSM 17436 / LMG 22146 / PsJN) (Burkholderia phytofirmans), this protein is Succinate--CoA ligase [ADP-forming] subunit beta.